Here is a 214-residue protein sequence, read N- to C-terminus: Transcriptional regulatory protein MctR (214 aa).

The 117-residue stretch at 8 to 124 (RVLLIDNHPL…EIVSAIETVA (117 aa)) folds into the Response regulatory domain. Position 59 is a 4-aspartylphosphate (Asp-59). An HTH luxR-type domain is found at 143–208 (VEEGSDPLTP…GLIRYALDHG (66 aa)). The segment at residues 167–186 (NKEIAETLGITSATAETHRK) is a DNA-binding region (H-T-H motif).

The protein localises to the cytoplasm. Functionally, member of the two-component regulatory system MctS/MctR, which activates mctP expression. This is Transcriptional regulatory protein MctR from Rhizobium johnstonii (strain DSM 114642 / LMG 32736 / 3841) (Rhizobium leguminosarum bv. viciae).